Consider the following 310-residue polypeptide: Tagatose-6-phosphate kinase (310 aa).

The protein belongs to the carbohydrate kinase PfkB family. LacC subfamily.

It carries out the reaction D-tagatofuranose 6-phosphate + ATP = D-tagatofuranose 1,6-bisphosphate + ADP + H(+). Its pathway is carbohydrate metabolism; D-tagatose 6-phosphate degradation; D-glyceraldehyde 3-phosphate and glycerone phosphate from D-tagatose 6-phosphate: step 1/2. The polypeptide is Tagatose-6-phosphate kinase (Staphylococcus aureus (strain Mu3 / ATCC 700698)).